A 114-amino-acid chain; its full sequence is Phosphoribosyl-ATP pyrophosphatase (114 aa).

Belongs to the PRA-PH family.

It localises to the cytoplasm. The catalysed reaction is 1-(5-phospho-beta-D-ribosyl)-ATP + H2O = 1-(5-phospho-beta-D-ribosyl)-5'-AMP + diphosphate + H(+). Its pathway is amino-acid biosynthesis; L-histidine biosynthesis; L-histidine from 5-phospho-alpha-D-ribose 1-diphosphate: step 2/9. This is Phosphoribosyl-ATP pyrophosphatase from Leuconostoc mesenteroides subsp. mesenteroides (strain ATCC 8293 / DSM 20343 / BCRC 11652 / CCM 1803 / JCM 6124 / NCDO 523 / NBRC 100496 / NCIMB 8023 / NCTC 12954 / NRRL B-1118 / 37Y).